Here is a 314-residue protein sequence, read N- to C-terminus: tRNA dimethylallyltransferase (314 aa).

13–20 (GPTAVGKT) serves as a coordination point for ATP. 15-20 (TAVGKT) contacts substrate. Residues 38–41 (DSMQ) are interaction with substrate tRNA.

The protein belongs to the IPP transferase family. As to quaternary structure, monomer. Mg(2+) is required as a cofactor.

It carries out the reaction adenosine(37) in tRNA + dimethylallyl diphosphate = N(6)-dimethylallyladenosine(37) in tRNA + diphosphate. Functionally, catalyzes the transfer of a dimethylallyl group onto the adenine at position 37 in tRNAs that read codons beginning with uridine, leading to the formation of N6-(dimethylallyl)adenosine (i(6)A). The chain is tRNA dimethylallyltransferase from Bacillus licheniformis (strain ATCC 14580 / DSM 13 / JCM 2505 / CCUG 7422 / NBRC 12200 / NCIMB 9375 / NCTC 10341 / NRRL NRS-1264 / Gibson 46).